The chain runs to 642 residues: Threonine--tRNA ligase (642 aa).

A TGS domain is found at 1 to 61 (MPVITLPDGS…ENDATLAIIT (61 aa)). A catalytic region spans residues 243 to 534 (DHRKIGKQLD…LTEEFAGFFP (292 aa)). Zn(2+) is bound by residues cysteine 334, histidine 385, and histidine 511.

Belongs to the class-II aminoacyl-tRNA synthetase family. Homodimer. The cofactor is Zn(2+).

It is found in the cytoplasm. The catalysed reaction is tRNA(Thr) + L-threonine + ATP = L-threonyl-tRNA(Thr) + AMP + diphosphate + H(+). Catalyzes the attachment of threonine to tRNA(Thr) in a two-step reaction: L-threonine is first activated by ATP to form Thr-AMP and then transferred to the acceptor end of tRNA(Thr). Also edits incorrectly charged L-seryl-tRNA(Thr). The chain is Threonine--tRNA ligase from Salmonella dublin (strain CT_02021853).